We begin with the raw amino-acid sequence, 451 residues long: Signal recognition particle 54 kDa protein (451 aa).

Residues 105–112 (GVQGTGKT), 187–191 (DTAGR), and 247–250 (TKMD) contribute to the GTP site.

This sequence belongs to the GTP-binding SRP family. SRP54 subfamily. As to quaternary structure, part of the signal recognition particle protein translocation system, which is composed of SRP and FtsY. Archaeal SRP consists of a 7S RNA molecule of 300 nucleotides and two protein subunits: SRP54 and SRP19.

Its subcellular location is the cytoplasm. The enzyme catalyses GTP + H2O = GDP + phosphate + H(+). Functionally, involved in targeting and insertion of nascent membrane proteins into the cytoplasmic membrane. Binds to the hydrophobic signal sequence of the ribosome-nascent chain (RNC) as it emerges from the ribosomes. The SRP-RNC complex is then targeted to the cytoplasmic membrane where it interacts with the SRP receptor FtsY. This is Signal recognition particle 54 kDa protein from Acidianus ambivalens (Desulfurolobus ambivalens).